The following is a 302-amino-acid chain: Putative beta-glucosidase 17 (302 aa).

The first 27 residues, 1–27 (MMAVAAATRIAVVVVAALAALAPGARG), serve as a signal peptide directing secretion. A beta-D-glucoside is bound by residues Gln-47, His-149, and 194-195 (NE). Catalysis depends on Glu-195, which acts as the Proton donor. A disulfide bridge links Cys-214 with Cys-221. An N-linked (GlcNAc...) asparagine glycan is attached at Asn-274.

This sequence belongs to the glycosyl hydrolase 1 family.

The enzyme catalyses Hydrolysis of terminal, non-reducing beta-D-glucosyl residues with release of beta-D-glucose.. This chain is Putative beta-glucosidase 17 (BGLU17), found in Oryza sativa subsp. japonica (Rice).